The chain runs to 258 residues: Phosphate import ATP-binding protein PstB (258 aa).

Positions 5-247 (LDLKDVNIYY…EKIFSNPRQK (243 aa)) constitute an ABC transporter domain. 37 to 44 (GPSGCGKS) provides a ligand contact to ATP.

Belongs to the ABC transporter superfamily. Phosphate importer (TC 3.A.1.7) family. The complex is composed of two ATP-binding proteins (PstB), two transmembrane proteins (PstC and PstA) and a solute-binding protein (PstS).

The protein resides in the cell membrane. It catalyses the reaction phosphate(out) + ATP + H2O = ADP + 2 phosphate(in) + H(+). Its function is as follows. Part of the ABC transporter complex PstSACB involved in phosphate import. Responsible for energy coupling to the transport system. In Mycolicibacterium smegmatis (Mycobacterium smegmatis), this protein is Phosphate import ATP-binding protein PstB.